The sequence spans 729 residues: Dipeptidyl peptidase 3 (729 aa).

His459 contributes to the Zn(2+) binding site. Glu460 is an active-site residue. Positions 464 and 517 each coordinate Zn(2+).

The protein belongs to the peptidase M49 family. Zn(2+) is required as a cofactor.

Its subcellular location is the cytoplasm. The catalysed reaction is Release of an N-terminal dipeptide from a peptide comprising four or more residues, with broad specificity. Also acts on dipeptidyl 2-naphthylamides.. In Nematostella vectensis (Starlet sea anemone), this protein is Dipeptidyl peptidase 3 (dpp3).